The following is a 99-amino-acid chain: Protein MOST-1 (99 aa).

As to quaternary structure, interacts with TSPO, IGHM and IGHD. Expressed in the heart, kidney, liver, pancreas, small intestine, ovary, testis, prostate and thymus. Expressed in all of the cancer cell lines tested.

It localises to the cytoplasm. The protein localises to the microsome membrane. It is found in the endoplasmic reticulum membrane. In terms of biological role, may be involved in cell survival, proliferation and progression of cancer cells. This is Protein MOST-1 (C8orf17) from Homo sapiens (Human).